We begin with the raw amino-acid sequence, 123 residues long: Large ribosomal subunit protein bL17 (123 aa).

Belongs to the bacterial ribosomal protein bL17 family. Part of the 50S ribosomal subunit. Contacts protein L32.

The sequence is that of Large ribosomal subunit protein bL17 from Dichelobacter nodosus (strain VCS1703A).